A 697-amino-acid polypeptide reads, in one-letter code: Pentatricopeptide repeat-containing protein At5g46460, mitochondrial (697 aa).

The transit peptide at Met1–Gln36 directs the protein to the mitochondrion. PPR repeat units lie at residues Glu39–Pro64, His65–Arg95, Asp96–Ser130, Trp131–Lys157, Asp158–Ser192, Trp193–Ser223, Thr224–Tyr258, Glu259–Glu289, Gln290–Pro324, Asn325–Thr359, Asp360–Lys390, Ser391–Pro425, Asp426–Gly456, and Lys463–Met497. The tract at residues Val498–Arg573 is type E motif. The interval Gly574–Lys602 is type E(+) motif. A type DYW motif region spans residues Glu603 to Trp697.

It belongs to the PPR family. PCMP-H subfamily.

The protein resides in the mitochondrion. This is Pentatricopeptide repeat-containing protein At5g46460, mitochondrial (PCMP-H49) from Arabidopsis thaliana (Mouse-ear cress).